The primary structure comprises 413 residues: MKIYAVGGAIRDALLGLPVRDRDYVVVGATPEQMAAQRFRPVGKDFPVFLHPDTHEEYALARTERKTAAGYHGFQFYYAPDVTLEQDLVRRDLTINAMAREVSPDGALVGPVVDPFGGQADLRAKLFRHVGDAFVEDPVRILRVARFAARFAEFAVAPDTAALMRAMVDAGEVDALVPERVWQELARGLMEAKPSRMFAVLRECGALARILPEIDALFGVPQRADYHPEVDTGVHVMMVIDHAAKQGYSLAVRFAALTHDLGKATTPADVLPRHIGHEGRSVDLLKPLCERLRVPNECRDLALVVAREHGNLHRVMEMGAAALVRLLERADALRKPARFAEALQASEADARGRLGLETKPYPQAERLRQALVAARAVDAGAIAQGLAGEPAKIKDAVHRARVRAVAQAVGVAD.

ATP is bound by residues Gly-8 and Arg-11. Residues Gly-8 and Arg-11 each contribute to the CTP site. Mg(2+) is bound by residues Asp-21 and Asp-23. Residues Arg-91, Arg-143, and Arg-146 each contribute to the ATP site. CTP-binding residues include Arg-91, Arg-143, and Arg-146. The 102-residue stretch at 232–333 folds into the HD domain; sequence TGVHVMMVID…VRLLERADAL (102 aa).

Belongs to the tRNA nucleotidyltransferase/poly(A) polymerase family. Bacterial CCA-adding enzyme type 1 subfamily. As to quaternary structure, monomer. Can also form homodimers and oligomers. It depends on Mg(2+) as a cofactor. Ni(2+) serves as cofactor.

The catalysed reaction is a tRNA precursor + 2 CTP + ATP = a tRNA with a 3' CCA end + 3 diphosphate. The enzyme catalyses a tRNA with a 3' CCA end + 2 CTP + ATP = a tRNA with a 3' CCACCA end + 3 diphosphate. Its function is as follows. Catalyzes the addition and repair of the essential 3'-terminal CCA sequence in tRNAs without using a nucleic acid template. Adds these three nucleotides in the order of C, C, and A to the tRNA nucleotide-73, using CTP and ATP as substrates and producing inorganic pyrophosphate. tRNA 3'-terminal CCA addition is required both for tRNA processing and repair. Also involved in tRNA surveillance by mediating tandem CCA addition to generate a CCACCA at the 3' terminus of unstable tRNAs. While stable tRNAs receive only 3'-terminal CCA, unstable tRNAs are marked with CCACCA and rapidly degraded. In Burkholderia pseudomallei (strain K96243), this protein is Multifunctional CCA protein.